Reading from the N-terminus, the 1139-residue chain is Solute carrier family 12 member 5 (1139 aa).

2 disordered regions span residues 1-62 (MSRR…KGRE) and 95-116 (PQGS…KPVQ). Residues 1-98 (MSRRFTVTSL…ANYTNLPQGS (98 aa)) lie on the Cytoplasmic side of the membrane. Residues 21-45 (PESRRHSVADPRRLPREDVKGDGNP) show a composition bias toward basic and acidic residues. Positions 46–55 (KESSPFINST) are enriched in polar residues. Thr57 carries the post-translational modification Phosphothreonine. Positions 98–111 (SKEHEEAENNEGGK) are enriched in basic and acidic residues. A discontinuously helical membrane pass occupies residues 99 to 120 (KEHEEAENNEGGKKKPVQAPRM). Residue Lys113 coordinates K(+). The Extracellular segment spans residues 121-129 (GTFMGVYLP). A helical membrane pass occupies residues 130-151 (CLQNIFGVILFLRLTWVVGIAG). The Cytoplasmic portion of the chain corresponds to 152 to 174 (IMESFCMVFICCSCTMLTAISMS). The helical transmembrane segment at 175-203 (AIATNGVVPAGGSYYMISRSLGPEFGGAV) threads the bilayer. Position 184 (Ala184) interacts with chloride. The Extracellular segment spans residues 204–229 (GLCFYLGTTFAGAMYILGTIEILLAY). Helical transmembrane passes span 230 to 250 (LFPA…AAML) and 251 to 276 (NNMR…KYVN). Residues 277 to 402 (KFALVFLGCV…ERRGMPSVGL (126 aa)) lie on the Extracellular side of the membrane. The cysteines at positions 310 and 325 are disulfide-linked. N-linked (GlcNAc...) asparagine glycans are attached at residues Asn314, Asn333, Asn351, and Asn362. Cysteines 345 and 354 form a disulfide. Residues 403–420 (ADGTPVDMDHPYVFSDMT) form a helical membrane-spanning segment. Met410 contributes to the K(+) binding site. Chloride is bound by residues Tyr414 and Val415. At 421-429 (SYFTLLVGI) the chain is on the cytoplasmic side. Residues 430–453 (YFPSVTGIMAGSNRSGDLRDAQKS) form a helical membrane-spanning segment. Position 446 (Asp446) interacts with K(+). Residues 454-485 (IPTGTILAIATTSAVYISSVVLFGACIEGVVL) lie on the Extracellular side of the membrane. The chain crosses the membrane as a helical span at residues 486–513 (RDKFGEAVNGNLVVGTLAWPSPWVIVIG). The Cytoplasmic segment spans residues 514–534 (SFFSTCGAGLQSLTGAPRLLQ). The next 2 helical transmembrane spans lie at 535–555 (AISR…KANG) and 556–578 (EPTW…ASLD). Position 569 (Glu569) interacts with chloride. At 579–592 (EVAPILSMFFLMCY) the chain is on the cytoplasmic side. Helical transmembrane passes span 593–615 (MFVN…PRFR) and 616–632 (YYHW…CLAL). Over 633–1139 (MFICSWYYAL…GGREVITIYS (507 aa)) the chain is Cytoplasmic. A scissor helix region spans residues 667-681 (GIRGLSLSAARYALL). Phosphothreonine; by OXSR1 and STK39 is present on Thr929. A disordered region spans residues 943-1025 (HLTKNERERE…PEGEGETDPE (83 aa)). Residues 945-962 (TKNEREREIQSITDESRG) are compositionally biased toward basic and acidic residues. Over residues 982–994 (TACDNEEKPEEEV) the composition is skewed to acidic residues. Low complexity predominate over residues 1003–1012 (PSCPSSSPSP). Position 1030 is a phosphothreonine; by OXSR1 and STK39 (Thr1030). Positions 1033 to 1052 (KDKSAAQKNKGPSPVSSEGI) are disordered. 3 positions are modified to phosphoserine: Ser1045, Ser1048, and Ser1049.

Belongs to the SLC12A transporter family. K/Cl co-transporter subfamily. In terms of assembly, homodimer; adopts a domain-swap conformation at the scissor helices connecting the transmembrane domain and C-terminal domain. Heterodimer wHeterodimer with K-Cl cotransporters SLC12A6 and SLC12A7. Interacts with AP2A1. In terms of processing, phosphorylated at Thr-929 and Thr-1030 by OXSR1/OSR1 and STK39/SPAK downstream of WNK kinases (WNK1, WNK2, WNK3 or WNK4), inhibiting the potassium-chloride cotransport activity. In terms of tissue distribution, highly expressed in brain. Not detected in other tissues. Highly expressed in pyramidal neurons and in neurons throughout the cortex, hippocampus, the granular layer of the cerebellum and in groups of neurons throughout the brainstem. Barely detectable in dorsal-root ganglions.

The protein localises to the cell membrane. The protein resides in the cell projection. It is found in the dendrite. It carries out the reaction K(+)(in) + chloride(in) = K(+)(out) + chloride(out). Its activity is regulated as follows. Inhibited following phosphorylation by OXSR1/OSR1 and STK39/SPAK: phosphorylation takes place downstream of WNK kinases (WNK1, WNK2, WNK3 or WNK4) in response to hyperosmotic stress and subsequent cell shrinkage. Mediates electroneutral potassium-chloride cotransport in mature neurons and is required for neuronal Cl(-) homeostasis. As major extruder of intracellular chloride, it establishes the low neuronal Cl(-) levels required for chloride influx after binding of GABA-A and glycine to their receptors, with subsequent hyperpolarization and neuronal inhibition. Involved in the regulation of dendritic spine formation and maturation. The chain is Solute carrier family 12 member 5 (Slc12a5) from Rattus norvegicus (Rat).